The primary structure comprises 80 residues: Large ribosomal subunit protein bL28 (80 aa).

Residues 1–21 (MSRICQITRKKSMKGNSVAHS) are disordered.

The protein belongs to the bacterial ribosomal protein bL28 family.

This Azobacteroides pseudotrichonymphae genomovar. CFP2 protein is Large ribosomal subunit protein bL28.